Here is a 374-residue protein sequence, read N- to C-terminus: tRNA (guanine(26)-N(2))-dimethyltransferase (374 aa).

Positions 4–371 (IEIREGKASL…KEIDEIVNCI (368 aa)) constitute a Trm1 methyltransferase domain. Residues arginine 44, arginine 69, aspartate 87, aspartate 113, and alanine 114 each contribute to the S-adenosyl-L-methionine site. 4 residues coordinate Zn(2+): cysteine 244, cysteine 247, cysteine 261, and cysteine 264.

The protein belongs to the class I-like SAM-binding methyltransferase superfamily. Trm1 family.

The enzyme catalyses guanosine(26) in tRNA + 2 S-adenosyl-L-methionine = N(2)-dimethylguanosine(26) in tRNA + 2 S-adenosyl-L-homocysteine + 2 H(+). Functionally, dimethylates a single guanine residue at position 26 of a number of tRNAs using S-adenosyl-L-methionine as donor of the methyl groups. This is tRNA (guanine(26)-N(2))-dimethyltransferase from Sulfurisphaera tokodaii (strain DSM 16993 / JCM 10545 / NBRC 100140 / 7) (Sulfolobus tokodaii).